Reading from the N-terminus, the 389-residue chain is Succinate--CoA ligase [ADP-forming] subunit beta (389 aa).

Positions 9–244 (KQLLAEYGIP…KTQEDETEVT (236 aa)) constitute an ATP-grasp domain. ATP is bound by residues Lys46, 53–55 (GRG), Gly102, and Glu107. Asn199 and Asp213 together coordinate Mg(2+). Substrate-binding positions include Asn264 and 321–323 (GIV).

The protein belongs to the succinate/malate CoA ligase beta subunit family. In terms of assembly, heterotetramer of two alpha and two beta subunits. The cofactor is Mg(2+).

It carries out the reaction succinate + ATP + CoA = succinyl-CoA + ADP + phosphate. The enzyme catalyses GTP + succinate + CoA = succinyl-CoA + GDP + phosphate. The protein operates within carbohydrate metabolism; tricarboxylic acid cycle; succinate from succinyl-CoA (ligase route): step 1/1. Its function is as follows. Succinyl-CoA synthetase functions in the citric acid cycle (TCA), coupling the hydrolysis of succinyl-CoA to the synthesis of either ATP or GTP and thus represents the only step of substrate-level phosphorylation in the TCA. The beta subunit provides nucleotide specificity of the enzyme and binds the substrate succinate, while the binding sites for coenzyme A and phosphate are found in the alpha subunit. This Xanthomonas euvesicatoria pv. vesicatoria (strain 85-10) (Xanthomonas campestris pv. vesicatoria) protein is Succinate--CoA ligase [ADP-forming] subunit beta.